The following is an 83-amino-acid chain: Large ribosomal subunit protein eL43 (83 aa).

The Zn(2+) site is built by Cys-38, Cys-41, Cys-56, and Cys-59. Residues 38–59 (CPVCGRRAVKRISTGIWQCTKC) form a C4-type zinc finger.

The protein belongs to the eukaryotic ribosomal protein eL43 family. Putative zinc-binding subfamily. As to quaternary structure, part of the 50S ribosomal subunit. Requires Zn(2+) as cofactor.

In terms of biological role, binds to the 23S rRNA. This is Large ribosomal subunit protein eL43 from Pyrococcus horikoshii (strain ATCC 700860 / DSM 12428 / JCM 9974 / NBRC 100139 / OT-3).